The following is a 154-amino-acid chain: Basic phospholipase A2 PC20 (154 aa).

Residues 1–21 (MYPAHLLVLLAVCVSLLGASA) form the signal peptide. Positions 22 to 27 (ISPRPL) are excised as a propeptide. 7 disulfides stabilise this stretch: Cys-38–Cys-98, Cys-54–Cys-143, Cys-56–Cys-72, Cys-71–Cys-125, Cys-78–Cys-118, Cys-87–Cys-111, and Cys-105–Cys-116. Ca(2+) contacts are provided by Tyr-55, Ser-57, and Gly-59. His-75 is a catalytic residue. Asp-76 lines the Ca(2+) pocket. Asp-119 is a catalytic residue.

Belongs to the phospholipase A2 family. Group I subfamily. D49 sub-subfamily. Ca(2+) is required as a cofactor. Expressed by the venom gland.

The protein resides in the secreted. It catalyses the reaction a 1,2-diacyl-sn-glycero-3-phosphocholine + H2O = a 1-acyl-sn-glycero-3-phosphocholine + a fatty acid + H(+). Its function is as follows. Snake venom phospholipase A2 (PLA2) that inhibits neuromuscular transmission by blocking acetylcholine release from the nerve termini. PLA2 catalyzes the calcium-dependent hydrolysis of the 2-acyl groups in 3-sn-phosphoglycerides. The protein is Basic phospholipase A2 PC20 of Laticauda colubrina (Yellow-lipped sea krait).